The primary structure comprises 419 residues: Gamma-glutamyl phosphate reductase (419 aa).

Belongs to the gamma-glutamyl phosphate reductase family.

It is found in the cytoplasm. The catalysed reaction is L-glutamate 5-semialdehyde + phosphate + NADP(+) = L-glutamyl 5-phosphate + NADPH + H(+). It participates in amino-acid biosynthesis; L-proline biosynthesis; L-glutamate 5-semialdehyde from L-glutamate: step 2/2. Catalyzes the NADPH-dependent reduction of L-glutamate 5-phosphate into L-glutamate 5-semialdehyde and phosphate. The product spontaneously undergoes cyclization to form 1-pyrroline-5-carboxylate. The polypeptide is Gamma-glutamyl phosphate reductase (Caldicellulosiruptor saccharolyticus (strain ATCC 43494 / DSM 8903 / Tp8T 6331)).